Consider the following 448-residue polypeptide: DEAD-box ATP-dependent RNA helicase CshB (448 aa).

Positions 4–32 match the Q motif motif; the sequence is HPFEQFNLESSLIDAVKDLNFEKPTEIQN. In terms of domain architecture, Helicase ATP-binding spans 35 to 206; it reads IPRILKRTNL…NKYLSHPEYV (172 aa). Residue 48-55 coordinates ATP; that stretch reads SQTGTGKS. Residues 154-157 carry the DEAD box motif; that stretch reads DEAD. Residues 236 to 386 form the Helicase C-terminal domain; it reads NLIDILNPYL…EVKAHNQRQA (151 aa). Residues 400–418 show a composition bias toward basic residues; that stretch reads NKVRSKIKNKVKPGYKKKF. Positions 400–448 are disordered; sequence NKVRSKIKNKVKPGYKKKFKQEVEKMKRQERKQFSKQQNRQKRKQNKKG. The segment covering 419 to 432 has biased composition (basic and acidic residues); sequence KQEVEKMKRQERKQ. Residues 438–448 are compositionally biased toward basic residues; it reads NRQKRKQNKKG.

This sequence belongs to the DEAD box helicase family. CshB subfamily.

It localises to the cytoplasm. It carries out the reaction ATP + H2O = ADP + phosphate + H(+). In terms of biological role, probable DEAD-box RNA helicase. May work in conjunction with the cold shock proteins to ensure proper initiation of transcription at low and optimal temperatures. This Staphylococcus aureus (strain NCTC 8325 / PS 47) protein is DEAD-box ATP-dependent RNA helicase CshB.